A 309-amino-acid chain; its full sequence is Ubiquitin domain-containing protein UBFD1 (309 aa).

The tract at residues 1 to 80 (MAAAGAPDGM…VSNGEDAGGG (80 aa)) is disordered. Residues 9–19 (GMEEPGMDTEA) show a composition bias toward acidic residues. Low complexity predominate over residues 35 to 57 (EAEAAAGAAAEDSGAARGSLQPA). One can recognise a Ubiquitin-like domain in the interval 84-159 (ELVDLKIIWN…IMVVGSTIND (76 aa)). The interval 171–204 (QQDAKAEENKKEPLCRQKQHRKVLDKGKPEDVMP) is disordered. 2 stretches are compositionally biased toward basic and acidic residues: residues 174–185 (AKAEENKKEPLC) and 192–201 (KVLDKGKPED).

As to quaternary structure, binds polyubiquitin.

May play a role as NF-kappa-B regulator. In Homo sapiens (Human), this protein is Ubiquitin domain-containing protein UBFD1 (UBFD1).